Reading from the N-terminus, the 538-residue chain is D-alanyl-D-alanine carboxypeptidase (538 aa).

The interval Met-1–Arg-21 is disordered. The signal sequence occupies residues Met-1–Ala-49. Ser-98 serves as the catalytic Acyl-ester intermediate. Catalysis depends on Lys-101, which acts as the Proton acceptor. The absent in class-A beta-lactamases stretch occupies residues Thr-146–Pro-319. Ser-347 is an active-site residue. Lys-459 is a binding site for substrate. Positions Gly-516–Cys-538 are cleaved as a propeptide — removed in mature form.

Belongs to the peptidase S13 family.

It is found in the secreted. The enzyme catalyses Preferential cleavage: (Ac)2-L-Lys-D-Ala-|-D-Ala. Also transpeptidation of peptidyl-alanyl moieties that are N-acyl substituents of D-alanine.. It functions in the pathway cell wall biogenesis; peptidoglycan biosynthesis. With respect to regulation, inhibited by benzylpenicillin, cephaloridine, ampicillin and cetiofur. Removes C-terminal D-alanyl residues from sugar-peptide cell wall precursors. This chain is D-alanyl-D-alanine carboxypeptidase (dac), found in Actinomadura sp. (strain R39).